The sequence spans 35 residues: Potassium channel toxin alpha-KTx 6.12 (35 aa).

The residue at position 1 (Q1) is a Pyrrolidone carboxylic acid. 4 cysteine pairs are disulfide-bonded: C4-C24, C10-C29, C14-C31, and C19-C34. K35 carries the post-translational modification Lysine amide.

This sequence belongs to the short scorpion toxin superfamily. Potassium channel inhibitor family. Alpha-KTx 06 subfamily. As to quaternary structure, monomer. As to expression, expressed by the venom gland.

The protein resides in the secreted. Its function is as follows. High affinity blocker of Kv1.3/KCNA3 channels of human T cells. Blocks Kv1.2/KCNA2 with an order of magnitude smaller than for Kv1.3/KCNA3. The chain is Potassium channel toxin alpha-KTx 6.12 from Anuroctonus phaiodactylus (Mafia scorpion).